Consider the following 508-residue polypeptide: Acetyl-coenzyme A carboxylase carboxyl transferase subunit beta, chloroplastic (508 aa).

Disordered stretches follow at residues 30-51 (PIENASESKDPNRNDTDKNIQG) and 173-234 (NSSN…SSTH). Over residues 35 to 47 (SESKDPNRNDTDK) the composition is skewed to basic and acidic residues. The span at 173–219 (NSSNNNSSNENSSNENSSNENSSNENSSNDYISSSISSQSENSSQNE) shows a compositional bias: low complexity. The segment covering 220-234 (DITTSDQTIPESSTH) has biased composition (polar residues). The region spanning 244-508 (LWVQCENCYG…LHTFFPLNQN (265 aa)) is the CoA carboxyltransferase N-terminal domain. Positions 248, 251, 267, and 270 each coordinate Zn(2+). The C4-type zinc-finger motif lies at 248-270 (CENCYGLNYKKFFKSKMHLCEQC).

It belongs to the AccD/PCCB family. As to quaternary structure, acetyl-CoA carboxylase is a heterohexamer composed of biotin carboxyl carrier protein, biotin carboxylase and 2 subunits each of ACCase subunit alpha and ACCase plastid-coded subunit beta (accD). Requires Zn(2+) as cofactor.

The protein localises to the plastid. It localises to the chloroplast stroma. It carries out the reaction N(6)-carboxybiotinyl-L-lysyl-[protein] + acetyl-CoA = N(6)-biotinyl-L-lysyl-[protein] + malonyl-CoA. It functions in the pathway lipid metabolism; malonyl-CoA biosynthesis; malonyl-CoA from acetyl-CoA: step 1/1. Its function is as follows. Component of the acetyl coenzyme A carboxylase (ACC) complex. Biotin carboxylase (BC) catalyzes the carboxylation of biotin on its carrier protein (BCCP) and then the CO(2) group is transferred by the transcarboxylase to acetyl-CoA to form malonyl-CoA. This chain is Acetyl-coenzyme A carboxylase carboxyl transferase subunit beta, chloroplastic, found in Lactuca sativa (Garden lettuce).